Reading from the N-terminus, the 568-residue chain is PTS system lactose-specific EIICB component (568 aa).

Residues 7–409 enclose the PTS EIIC type-3 domain; the sequence is LIEKGKPFFE…VVDTIIYYPF (403 aa). A run of 9 helical transmembrane segments spans residues 30-50, 62-82, 103-123, 128-148, 183-203, 222-242, 283-303, 339-359, and 389-409; these read GFIA…IAYV, IETF…FFVG, INFL…AAEP, GFLT…AAFV, FTVS…TLGV, GYLG…VGIH, FIAT…FMWI, IFFV…KFFV, and VLSF…YYPF. The 103-residue stretch at 466–568 folds into the PTS EIIB type-3 domain; the sequence is ETNVLVLCAG…ALAFVQQQFD (103 aa). C473 acts as the Phosphocysteine intermediate; for EIIB activity in catalysis. C473 is modified (phosphocysteine; by EIIA).

The protein resides in the cell membrane. The enzyme catalyses lactose(out) + N(pros)-phospho-L-histidyl-[protein] = lactose 6-phosphate(in) + L-histidyl-[protein]. Its function is as follows. The phosphoenolpyruvate-dependent sugar phosphotransferase system (sugar PTS), a major carbohydrate active transport system, catalyzes the phosphorylation of incoming sugar substrates concomitantly with their translocation across the cell membrane. The enzyme II LacEF PTS system is involved in lactose transport. In Lactococcus lactis subsp. lactis (Streptococcus lactis), this protein is PTS system lactose-specific EIICB component.